The chain runs to 288 residues: uncharacterized protein (288 aa).

Positions 1–12 are enriched in basic and acidic residues; it reads MTEGRCAQHPDG. The segment at 1–20 is disordered; the sequence is MTEGRCAQHPDGLDVQDVCD.

It belongs to the class IV-like SAM-binding methyltransferase superfamily. RNA methyltransferase TrmH family.

This is an uncharacterized protein from Mycobacterium bovis (strain ATCC BAA-935 / AF2122/97).